A 347-amino-acid chain; its full sequence is Subtilase cytotoxin subunit A (347 aa).

Positions 1–21 are cleaved as a signal peptide; the sequence is MLKILWTYILFLLFISASARA. Residues 24–327 enclose the Peptidase S8 domain; that stretch reads PWYFDAIGLT…GRVLNAEKAI (304 aa). Catalysis depends on charge relay system residues Asp52, His89, and Ser272. Cys288 and Cys331 are joined by a disulfide. The tract at residues 322 to 347 is A2 domain; that stretch reads NAEKAISMFCKKNYIPVRQGRMSEEL. The Prevents secretion from ER motif lies at 344-347; sequence SEEL.

The protein belongs to the peptidase S8 family. In terms of assembly, forms a complex with SubB with the stoichiometry SubA1:SubB5 (called SubAB5).

It localises to the secreted. It is found in the host cytoplasm. The protein resides in the host cytosol. Its subcellular location is the host endoplasmic reticulum lumen. Its function is as follows. Protease subunit of subtilase cytotoxin SubAB5. An endoprotease specific for host endoplasmic reticulum (ER) chaperone BiP/HSPA5, has no activity on human HSP70 or HSPA8. Cleaves between 'Leu-416' and 'Leu-417' of BiP/HSPA5 in the hinge between BiP's ATPase and protein-binding domains. This induces host ER stress response and eventual cell death. Culture supernatant of E.coli expressing both subA and subB are toxic for Vero cells (African green monkey kidney cell line), Chinese hamster ovary cells and Hct-8 cells (human colonic epithelial cell line); the subunits are not toxic individually. Purified SubAB5 is highly toxic, &lt;0.1 pg is able to kill at least 50% of 30'000 Vero cells in a microtiter plate assay after 3 days; no cytotoxicity is seen at 24 hours. Preabsorption with cells expressing a ganglioside GM2 mimic reduced cytotoxicity of SubAB5 by 93% in the Vero cytotoxicity assay. Intraperitoneal injection of 200 ng of purified SubAB5 kills mice; the higher the dose the faster the mice die. Animals injected intraperitoneally with purified SubAB5 have microvascular thrombi in the brain and other organs, including the renal tubules and glomeruli. Injection induces an unfolded response in mice. Mice fed E.coli cells expressing cloned SubAB5 experience drastic weight loss and appear ill and lethargic. Protein synthesis in Vero cells is transiently inhibited by SubAB5; both subunits are required for this effect. Inhibition of protein synthesis is prevented by brefeldin A; cells are arrested in the G1 phase. SubAB5 at 100 ng/ml induced caspase-dependent apoptosis in Vero cells through mitochondrial membrane damage. This is Subtilase cytotoxin subunit A from Escherichia coli.